The following is a 46-amino-acid chain: Cysteine-rich venom protein asurin-1 (46 aa).

The protein belongs to the CRISP family. Post-translationally, contains 8 disulfide bonds. In terms of tissue distribution, expressed by the venom gland.

The protein resides in the secreted. In terms of biological role, blocks contraction of smooth muscle elicited by high potassium-induced depolarization, but does not block caffeine-stimulated contraction. May target voltage-gated calcium channels on smooth muscle. The chain is Cysteine-rich venom protein asurin-1 from Austrelaps superbus (Lowland copperhead snake).